The primary structure comprises 698 residues: Adhesion G protein-coupled receptor F4 (698 aa).

The signal sequence occupies residues 1 to 19 (MKPWIAMVCCLVFFLTTEC). Over 20–409 (SHSKPKTHRK…VKNTILNHIT (390 aa)) the chain is Extracellular. 7 N-linked (GlcNAc...) asparagine glycosylation sites follow: Asn61, Asn168, Asn213, Asn268, Asn290, Asn344, and Asn375. The GAIN-B domain occupies 250–401 (RISHSSSEHS…SILMSSKPVK (152 aa)). Disulfide bonds link Cys353-Cys380 and Cys368-Cys382. The tract at residues 353–401 (CVSWDPATGQWDESPCTVMSDINSTVKCRCRHTKAVTSFSILMSSKPVK) is GPS. A helical transmembrane segment spans residues 410–430 (FIGLSISIFSLVLCLVIEAIV). Residues 431–444 (WSRVVVTEISYMRH) are Cytoplasmic-facing. A helical membrane pass occupies residues 445-465 (VCIVNIAVSLLTANVWFIIGS). The N-linked (GlcNAc...) asparagine glycan is linked to Asn466. The Extracellular portion of the chain corresponds to 466–486 (NFSANVQEDHKWCVAVTFLCH). A helical transmembrane segment spans residues 487–507 (FFFLSLFFWMLFKALLIVYGI). Residues 508 to 518 (LVVFRRMMKSR) are Cytoplasmic-facing. The helical transmembrane segment at 519–539 (MMAIGFAIGYGCPLVIAVITV) threads the bilayer. The Extracellular segment spans residues 540–566 (TVTEPGEGYTRKDACWLNWNQTKALFA). A glycan (N-linked (GlcNAc...) asparagine) is linked at Asn559. A helical membrane pass occupies residues 567 to 587 (FAIPALAIVAVNLLVVLAVAI). The Cytoplasmic portion of the chain corresponds to 588 to 611 (NTQRPLIGSSKSQDMAIVFRISKN). Residues 612–632 (VAILTPLLGLTWGFGLTTLLE) traverse the membrane as a helical segment. At 633–635 (GVH) the chain is on the extracellular side. The chain crosses the membrane as a helical span at residues 636–656 (LVFHIIFALLNAFQGFFILLF). Over 657 to 698 (GTIMDHKIRDALRMRVSSLKGKSRAAEKVSLSPANGSRILNR) the chain is Cytoplasmic.

This sequence belongs to the G-protein coupled receptor 2 family. Adhesion G-protein coupled receptor (ADGR) subfamily. Expressed in squamous epithelia.

Its subcellular location is the membrane. Functionally, orphan receptor. This is Adhesion G protein-coupled receptor F4 (Adgrf4) from Mus musculus (Mouse).